The following is an 887-amino-acid chain: Tubulin polyglutamylase TTLL7 (887 aa).

Residues 1–21 (MPSLPQEGVIQGPSPLDLNTE) form a disordered region. Residues 38–390 (KGTITANVAG…RTSDKRRNLA (353 aa)) form the TTL domain. ATP is bound by residues Lys-160, 166 to 167 (MG), 188 to 191 (QEYI), and 201 to 203 (KFD). Arg-227 is a binding site for L-glutamate. Residue 249–250 (TN) participates in ATP binding. L-glutamate contacts are provided by Tyr-251, Ser-252, and Lys-271. Residues Asp-336, Glu-349, and Asn-351 each coordinate Mg(2+). Lys-367 is an L-glutamate binding site. Residues 388-450 (NLAKQKAEAQ…ISREEHENRH (63 aa)) form a c-MTBD region region. 2 disordered regions span residues 519–621 (MGKT…TRPF) and 651–676 (LPHS…TKEQ). Residues 548-560 (SSDSSYDSSSSSS) are compositionally biased toward low complexity. Composition is skewed to polar residues over residues 593–621 (QQPS…TRPF) and 656–670 (DACS…SLRQ).

It belongs to the tubulin--tyrosine ligase family. As to quaternary structure, interacts with both alpha- and beta-tubulin (via C-terminal tubulin tails). Mg(2+) serves as cofactor. In terms of tissue distribution, highly expressed in the nervous system including spinal cord, thalamus, hippocampus, hypothalamus and cerebellum.

Its subcellular location is the cell projection. The protein resides in the cilium. It localises to the cytoplasm. It is found in the cytoskeleton. The protein localises to the cilium basal body. Its subcellular location is the dendrite. The protein resides in the perikaryon. The catalysed reaction is L-glutamyl-[protein] + L-glutamate + ATP = gamma-L-glutamyl-L-glutamyl-[protein] + ADP + phosphate + H(+). It catalyses the reaction (L-glutamyl)(n)-gamma-L-glutamyl-L-glutamyl-[protein] + L-glutamate + ATP = (L-glutamyl)(n+1)-gamma-L-glutamyl-L-glutamyl-[protein] + ADP + phosphate + H(+). Functionally, polyglutamylase which modifies tubulin, generating polyglutamate side chains of variable lengths on the gamma-carboxyl group of specific glutamate residues within the C-terminal tail of tubulin. Mediates both ATP-dependent initiation and elongation steps of the polyglutamylation reaction. Preferentially modifies the beta-tubulin tail over an alpha-tail. Competes with monoglycylase TTLL3 for modification site on beta-tubulin substrate, thereby creating an anticorrelation between glycylation and glutamylation reactions. Required for neurite growth; responsible for the strong increase in tubulin polyglutamylation during postnatal neuronal maturation. The polypeptide is Tubulin polyglutamylase TTLL7 (Homo sapiens (Human)).